The primary structure comprises 903 residues: Translation initiation factor IF-2 (903 aa).

The tract at residues 66 to 296 is disordered; the sequence is QATLKGEGPV…GRSRKREMEN (231 aa). Residues 121 to 132 are compositionally biased toward basic and acidic residues; sequence NTDETRVQEHKP. 2 stretches are compositionally biased toward low complexity: residues 139-152 and 178-195; these read AGDA…AAAG and AATG…GQQS. Positions 204 to 231 are enriched in basic and acidic residues; sequence EGRSRQDENKGSAREDQANRFATRDKEA. Over residues 246–255 the composition is skewed to basic residues; that stretch reads RRPAHSKPLR. Composition is skewed to basic and acidic residues over residues 263–276 and 285–296; these read VTKD…DRSN and ESGRSRKREMEN. The region spanning 403 to 572 is the tr-type G domain; it reads ERPPVVTVMG…LLTADVAELK (170 aa). Residues 412 to 419 are G1; that stretch reads GHVDHGKT. 412–419 contacts GTP; that stretch reads GHVDHGKT. Positions 437–441 are G2; that stretch reads GITQH. Positions 458 to 461 are G3; the sequence is DTPG. GTP is bound by residues 458–462 and 512–515; these read DTPGH and NKID. Residues 512–515 form a G4 region; the sequence is NKID. The tract at residues 548–550 is G5; the sequence is SAV.

It belongs to the TRAFAC class translation factor GTPase superfamily. Classic translation factor GTPase family. IF-2 subfamily.

It is found in the cytoplasm. Functionally, one of the essential components for the initiation of protein synthesis. Protects formylmethionyl-tRNA from spontaneous hydrolysis and promotes its binding to the 30S ribosomal subunits. Also involved in the hydrolysis of GTP during the formation of the 70S ribosomal complex. This Moorella thermoacetica (strain ATCC 39073 / JCM 9320) protein is Translation initiation factor IF-2.